We begin with the raw amino-acid sequence, 150 residues long: uncharacterized protein (150 aa).

One can recognise an HTH marR-type domain in the interval 1 to 133 (MNDILREIGM…ISALLHRVRK (133 aa)). A DNA-binding region (H-T-H motif) is located at residues 47–70 (QEKLAEMIKVDRTTAARAIKKLEM).

This is an uncharacterized protein from Bacillus subtilis (strain 168).